A 466-amino-acid polypeptide reads, in one-letter code: Argininosuccinate lyase (466 aa).

This sequence belongs to the lyase 1 family. Argininosuccinate lyase subfamily.

The protein resides in the cytoplasm. It catalyses the reaction 2-(N(omega)-L-arginino)succinate = fumarate + L-arginine. It participates in amino-acid biosynthesis; L-arginine biosynthesis; L-arginine from L-ornithine and carbamoyl phosphate: step 3/3. This is Argininosuccinate lyase from Methylocella silvestris (strain DSM 15510 / CIP 108128 / LMG 27833 / NCIMB 13906 / BL2).